Consider the following 250-residue polypeptide: Aquaporin TIP1-1 (250 aa).

2 helical membrane-spanning segments follow: residues 24–44 (FAEF…GMAF) and 56–76 (AGLI…VSVG). The NPA 1 motif lies at 85-87 (NPA). The next 3 helical transmembrane spans lie at 104–126 (LLYW…FSTG), 143–163 (ALVL…ATAV), and 172–192 (TIAP…GGAF). The NPA 2 motif lies at 198–200 (NPA). The helical transmembrane segment at 218–238 (YWVGPLIGGGLAGVIYELLFI) threads the bilayer.

It belongs to the MIP/aquaporin (TC 1.A.8) family. TIP (TC 1.A.8.10) subfamily. As to expression, expressed in roots, shoots, leaves, tassels, ears and embryos. Expressed in meristems and zones of cell enlargement: tips of primary and lateral roots, leaf primordia, and male and female inflorescence meristems. Highly expressed in the root epidermis and endodermis, parenchyma cells surrounding mature xylem vessels in the root and the stem, phloem companion cells and a ring of cells around the phloem strand in the stem and the leaf sheath, and the basal endosperm transfer cells in developing kernels.

It is found in the vacuole membrane. Its function is as follows. Water channel required to facilitate the transport of water across cell membrane. May support the rapid influx of water into vacuoles during cell expansion, permit osmotic equilibration between the cytosol and the vacuolar content and rapid transcellular water flow through living cells. Its function is impaired by Hg(2+). In Zea mays (Maize), this protein is Aquaporin TIP1-1 (TIP1-1).